The chain runs to 380 residues: Acetylornithine deacetylase (380 aa).

H79 is a binding site for Zn(2+). Residue D81 is part of the active site. D109 is a binding site for Zn(2+). The active site involves E139. E140, E164, and H351 together coordinate Zn(2+).

This sequence belongs to the peptidase M20A family. ArgE subfamily. Homodimer. It depends on Zn(2+) as a cofactor. Co(2+) serves as cofactor. Glutathione is required as a cofactor.

The protein localises to the cytoplasm. The enzyme catalyses N(2)-acetyl-L-ornithine + H2O = L-ornithine + acetate. The protein operates within amino-acid biosynthesis; L-arginine biosynthesis; L-ornithine from N(2)-acetyl-L-ornithine (linear): step 1/1. Its function is as follows. Catalyzes the hydrolysis of the amide bond of N(2)-acetylated L-amino acids. Cleaves the acetyl group from N-acetyl-L-ornithine to form L-ornithine, an intermediate in L-arginine biosynthesis pathway, and a branchpoint in the synthesis of polyamines. In Myxococcus xanthus, this protein is Acetylornithine deacetylase.